A 130-amino-acid chain; its full sequence is Large ribosomal subunit protein bL17 (130 aa).

It belongs to the bacterial ribosomal protein bL17 family. Part of the 50S ribosomal subunit. Contacts protein L32.

The chain is Large ribosomal subunit protein bL17 from Azotobacter vinelandii (strain DJ / ATCC BAA-1303).